The sequence spans 434 residues: Beta-enolase (434 aa).

Residue Ala-2 is modified to N-acetylalanine. The residue at position 72 (Thr-72) is a Phosphothreonine. A phosphoserine mark is found at Ser-83 and Ser-157. The substrate site is built by His-158 and Glu-167. The residue at position 176 (Ser-176) is a Phosphoserine. Thr-205 is subject to Phosphothreonine. The Proton donor role is filled by Glu-210. Thr-229 bears the Phosphothreonine mark. Tyr-236 is modified (phosphotyrosine). Asp-245 is a Mg(2+) binding site. Ser-263 bears the Phosphoserine mark. Substrate contacts are provided by Glu-293 and Asp-318. Mg(2+) contacts are provided by Glu-293 and Asp-318. Lys-343 (proton acceptor) is an active-site residue. Substrate is bound by residues 370–373 and Lys-394; that span reads SHRS.

This sequence belongs to the enolase family. Mammalian enolase is composed of 3 isozyme subunits, alpha, beta and gamma, which can form homodimers or heterodimers which are cell-type and development-specific. Interacts with PNKD. Mg(2+) is required as a cofactor. In terms of tissue distribution, the alpha/alpha homodimer is expressed in embryo and in most adult tissues. The alpha/beta heterodimer and the beta/beta homodimer are found in striated muscle, and the alpha/gamma heterodimer and the gamma/gamma homodimer in neurons.

Its subcellular location is the cytoplasm. The enzyme catalyses (2R)-2-phosphoglycerate = phosphoenolpyruvate + H2O. Its pathway is carbohydrate degradation; glycolysis; pyruvate from D-glyceraldehyde 3-phosphate: step 4/5. Its function is as follows. Glycolytic enzyme that catalyzes the conversion of 2-phosphoglycerate to phosphoenolpyruvate. Appears to have a function in striated muscle development and regeneration. The sequence is that of Beta-enolase (ENO3) from Homo sapiens (Human).